We begin with the raw amino-acid sequence, 126 residues long: SOSS complex subunit C homolog (126 aa).

The tract at residues 106–126 (LEPLPSPATTPTAPPSHSISK) is disordered. Residues 107 to 119 (EPLPSPATTPTAP) are compositionally biased toward pro residues.

Belongs to the SOSS-C family.

This Drosophila sechellia (Fruit fly) protein is SOSS complex subunit C homolog.